The sequence spans 122 residues: UPF0102 protein RHE_CH00320 (122 aa).

Belongs to the UPF0102 family.

This chain is UPF0102 protein RHE_CH00320, found in Rhizobium etli (strain ATCC 51251 / DSM 11541 / JCM 21823 / NBRC 15573 / CFN 42).